A 191-amino-acid polypeptide reads, in one-letter code: Protein LIGHT-DEPENDENT SHORT HYPOCOTYLS 9 (191 aa).

Residues 1–14 (MSSDRHTPTKDPPD) show a composition bias toward basic and acidic residues. 2 disordered regions span residues 1–41 (MSSD…YESQ) and 153–191 (QAKA…QSFT). Positions 37 to 165 (RYESQKRRDW…ARGIPYRKKK (129 aa)) constitute an ALOG domain. Residues 160-169 (PYRKKKRRKT) show a composition bias toward basic residues. The Nuclear localization signal motif lies at 163–167 (KKKRR). A compositionally biased stretch (polar residues) spans 181–191 (ANSSTPNQSFT).

It belongs to the plant homeotic and developmental regulators ALOG protein family.

The protein localises to the nucleus. Probable transcription regulator that acts as a developmental regulator by promoting cell growth in response to light. In Arabidopsis thaliana (Mouse-ear cress), this protein is Protein LIGHT-DEPENDENT SHORT HYPOCOTYLS 9 (LSH9).